The sequence spans 29 residues: Brevinin-2Ee (29 aa).

Cys-23 and Cys-29 are disulfide-bonded.

Belongs to the frog skin active peptide (FSAP) family. Brevinin subfamily. In terms of tissue distribution, expressed by the skin glands.

The protein resides in the secreted. In terms of biological role, shows antibacterial activity against representative Gram-negative and Gram-positive bacterial species, and hemolytic activity. The protein is Brevinin-2Ee of Pelophylax lessonae (Pool frog).